We begin with the raw amino-acid sequence, 238 residues long: Peptidyl-tRNA hydrolase (238 aa).

Residue tyrosine 14 participates in tRNA binding. Histidine 19 (proton acceptor) is an active-site residue. Residues phenylalanine 64, asparagine 66, and asparagine 112 each coordinate tRNA. Positions 190–202 (KTEEPAPKPEKKT) are enriched in basic and acidic residues. The segment at 190–225 (KTEEPAPKPEKKTVAKSHIHQARNHNQPRMPESGPM) is disordered. Basic residues predominate over residues 203–212 (VAKSHIHQAR).

The protein belongs to the PTH family. As to quaternary structure, monomer.

Its subcellular location is the cytoplasm. It catalyses the reaction an N-acyl-L-alpha-aminoacyl-tRNA + H2O = an N-acyl-L-amino acid + a tRNA + H(+). In terms of biological role, hydrolyzes ribosome-free peptidyl-tRNAs (with 1 or more amino acids incorporated), which drop off the ribosome during protein synthesis, or as a result of ribosome stalling. Functionally, catalyzes the release of premature peptidyl moieties from peptidyl-tRNA molecules trapped in stalled 50S ribosomal subunits, and thus maintains levels of free tRNAs and 50S ribosomes. The chain is Peptidyl-tRNA hydrolase from Rhizobium rhizogenes (strain K84 / ATCC BAA-868) (Agrobacterium radiobacter).